Reading from the N-terminus, the 597-residue chain is Phosphoinositide phospholipase C 4 (597 aa).

Residues 26 to 60 (GPVEDVRDLFEKYTEGDAHMSPEQLQKLMTEEGGE) form the EF-hand domain. A PI-PLC X-box domain is found at 114 to 257 (QNMDAPLSHY…LKEKILISTK (144 aa)). Residues His129 and His174 contribute to the active site. Residues 259–290 (PKEYLEANDTKEKDNGEKGKDSDEDVWGKEPE) show a composition bias toward basic and acidic residues. Residues 259-324 (PKEYLEANDT…ERGSCESDTS (66 aa)) form a disordered region. Residues 293–309 (ISTQSDLDKVTSSVNDL) are compositionally biased toward polar residues. Residues 333-449 (KRLIAIHAGK…GYVKKPDFLM (117 aa)) form the PI-PLC Y-box domain. In terms of domain architecture, C2 spans 449-579 (MDASPNGQDF…QGIRAVPLFN (131 aa)).

Ca(2+) is required as a cofactor. In terms of tissue distribution, low expression in leaves, roots, flowers and siliques. Expressed in pollen and in cells of the stigma surface.

It is found in the cytoplasm. Its subcellular location is the cytosol. It localises to the cell membrane. It carries out the reaction a 1,2-diacyl-sn-glycero-3-phospho-(1D-myo-inositol-4,5-bisphosphate) + H2O = 1D-myo-inositol 1,4,5-trisphosphate + a 1,2-diacyl-sn-glycerol + H(+). In terms of biological role, the production of the second messenger molecules diacylglycerol (DAG) and inositol 1,4,5-trisphosphate (IP3) is mediated by activated phosphatidylinositol-specific phospholipase C enzymes. The sequence is that of Phosphoinositide phospholipase C 4 (PLC4) from Arabidopsis thaliana (Mouse-ear cress).